Consider the following 291-residue polypeptide: Undecaprenyl-diphosphatase 2 (291 aa).

6 helical membrane-spanning segments follow: residues 39–59 (PGAAFTAITQIGTEAAVLIYF), 85–105 (ARMGWLVIVGSIPIGVLGLTL), 118–138 (ITATMLIVVGVIIGIADRMAA), 198–218 (AARYSFLLAIPAVLASGVFEL), 231–251 (PTLFATVIAFATGYVVIAWFM), and 262–282 (FVWYRIALGIVIIVLVSVGVL).

Belongs to the UppP family.

It localises to the cell membrane. The catalysed reaction is di-trans,octa-cis-undecaprenyl diphosphate + H2O = di-trans,octa-cis-undecaprenyl phosphate + phosphate + H(+). In terms of biological role, catalyzes the dephosphorylation of undecaprenyl diphosphate (UPP). Confers resistance to bacitracin. This Streptomyces coelicolor (strain ATCC BAA-471 / A3(2) / M145) protein is Undecaprenyl-diphosphatase 2.